Here is a 131-residue protein sequence, read N- to C-terminus: MKKTGVMNSNISRVIADMGHMDWLGVGDAGTPVPAETEKIDLSVRPGLPSFIDVLEEVLKELEVQKMYIAEEIKTENPKQLEAIKRTVPNVEIEFIPHSELKKDLKSSKAFIRTGEETPYSNVILESGVVF.

The active-site Proton donor is H20. Substrate-binding positions include D28, H98, and 120–122 (YSN).

Belongs to the RbsD / FucU family. RbsD subfamily. As to quaternary structure, homodecamer.

The protein resides in the cytoplasm. The enzyme catalyses beta-D-ribopyranose = beta-D-ribofuranose. It functions in the pathway carbohydrate metabolism; D-ribose degradation; D-ribose 5-phosphate from beta-D-ribopyranose: step 1/2. Its function is as follows. Catalyzes the interconversion of beta-pyran and beta-furan forms of D-ribose. The polypeptide is D-ribose pyranase (Lactobacillus johnsonii (strain CNCM I-12250 / La1 / NCC 533)).